The sequence spans 371 residues: Cathepsin W (371 aa).

A signal peptide spans 1 to 21 (MTLTAHLSYFLVLLLAGQGLS). A propeptide spanning residues 22 to 125 (DSLLTKDAGP…KVESNTWGES (104 aa)) is cleaved from the precursor. Asn-48 and Asn-112 each carry an N-linked (GlcNAc...) asparagine glycan. Intrachain disulfides connect Cys-148/Cys-189, Cys-182/Cys-224, and Cys-282/Cys-347. The active site involves Cys-151. A glycan (N-linked (GlcNAc...) asparagine) is linked at Asn-203. Active-site residues include His-289 and Asn-326. Asn-344 carries N-linked (GlcNAc...) asparagine glycosylation.

It belongs to the peptidase C1 family.

The protein resides in the endoplasmic reticulum. Its function is as follows. May have a specific function in the mechanism or regulation of T-cell cytolytic activity. The chain is Cathepsin W (Ctsw) from Mus musculus (Mouse).